Reading from the N-terminus, the 506-residue chain is Glutamate--tRNA ligase (506 aa).

Positions 24–34 (PSPTGTPHVGL) match the 'HIGH' region motif. The disordered stretch occupies residues 124–147 (TPEEVEQRHRAKGEDPKRGYDNYD). The span at 128–147 (VEQRHRAKGEDPKRGYDNYD) shows a compositional bias: basic and acidic residues. A 'KMSKS' region motif is present at residues 268-272 (KLSKR). Residue Lys-271 coordinates ATP.

It belongs to the class-I aminoacyl-tRNA synthetase family. Glutamate--tRNA ligase type 1 subfamily. In terms of assembly, monomer.

Its subcellular location is the cytoplasm. It carries out the reaction tRNA(Glu) + L-glutamate + ATP = L-glutamyl-tRNA(Glu) + AMP + diphosphate. Catalyzes the attachment of glutamate to tRNA(Glu) in a two-step reaction: glutamate is first activated by ATP to form Glu-AMP and then transferred to the acceptor end of tRNA(Glu). In Kocuria rhizophila (strain ATCC 9341 / DSM 348 / NBRC 103217 / DC2201), this protein is Glutamate--tRNA ligase.